The chain runs to 283 residues: Quinate/shikimate dehydrogenase (NAD(+)) (283 aa).

Residues serine 17, threonine 69, lysine 73, asparagine 94, and aspartate 110 each contribute to the shikimate site. Residues 17–19 (SRT), threonine 69, lysine 73, asparagine 94, and aspartate 110 each bind L-quinate. Residue lysine 73 is the Proton acceptor of the active site. Residues 137 to 138 (GV), aspartate 158, arginine 163, 203 to 206 (PMGM), alanine 213, valine 228, and glycine 251 contribute to the NAD(+) site. Glutamine 258 lines the shikimate pocket. L-quinate is bound at residue glutamine 258.

This sequence belongs to the shikimate dehydrogenase family. In terms of assembly, homodimer.

It catalyses the reaction L-quinate + NAD(+) = 3-dehydroquinate + NADH + H(+). It carries out the reaction shikimate + NAD(+) = 3-dehydroshikimate + NADH + H(+). Its pathway is metabolic intermediate biosynthesis; chorismate biosynthesis; chorismate from D-erythrose 4-phosphate and phosphoenolpyruvate: step 4/7. It functions in the pathway aromatic compound metabolism; 3,4-dihydroxybenzoate biosynthesis; 3-dehydroquinate from D-quinate (NAD(+) route). Involved in the biosynthesis of the chorismate, which leads to the biosynthesis of aromatic amino acids, and plays a key role in the quinate degradation pathway. Catalyzes the NAD(+)-dependent oxidation of both quinate and shikimate to 3-dehydroquinate and 3-dehydroshikimate, respectively. It can only use NAD. In Corynebacterium glutamicum (strain ATCC 13032 / DSM 20300 / JCM 1318 / BCRC 11384 / CCUG 27702 / LMG 3730 / NBRC 12168 / NCIMB 10025 / NRRL B-2784 / 534), this protein is Quinate/shikimate dehydrogenase (NAD(+)).